Here is a 416-residue protein sequence, read N- to C-terminus: UDP-N-acetylglucosamine 1-carboxyvinyltransferase (416 aa).

22 to 23 (KN) provides a ligand contact to phosphoenolpyruvate. Arg-92 provides a ligand contact to UDP-N-acetyl-alpha-D-glucosamine. The active-site Proton donor is the Cys-116. The residue at position 116 (Cys-116) is a 2-(S-cysteinyl)pyruvic acid O-phosphothioketal. Residues 121–125 (RPVDQ), Asp-304, and Ile-326 contribute to the UDP-N-acetyl-alpha-D-glucosamine site.

It belongs to the EPSP synthase family. MurA subfamily.

The protein localises to the cytoplasm. It carries out the reaction phosphoenolpyruvate + UDP-N-acetyl-alpha-D-glucosamine = UDP-N-acetyl-3-O-(1-carboxyvinyl)-alpha-D-glucosamine + phosphate. It participates in cell wall biogenesis; peptidoglycan biosynthesis. In terms of biological role, cell wall formation. Adds enolpyruvyl to UDP-N-acetylglucosamine. The sequence is that of UDP-N-acetylglucosamine 1-carboxyvinyltransferase from Cupriavidus necator (strain ATCC 17699 / DSM 428 / KCTC 22496 / NCIMB 10442 / H16 / Stanier 337) (Ralstonia eutropha).